Consider the following 404-residue polypeptide: Cysteine desulfurase IscS (404 aa).

Residues 75–76 (AT), Asn-155, Gln-183, and 203–205 (SAH) contribute to the pyridoxal 5'-phosphate site. Lys-206 is modified (N6-(pyridoxal phosphate)lysine). Residue Thr-243 coordinates pyridoxal 5'-phosphate. Cys-328 acts as the Cysteine persulfide intermediate in catalysis. Cys-328 is a binding site for [2Fe-2S] cluster.

The protein belongs to the class-V pyridoxal-phosphate-dependent aminotransferase family. NifS/IscS subfamily. In terms of assembly, homodimer. Forms a heterotetramer with IscU, interacts with other sulfur acceptors. Pyridoxal 5'-phosphate is required as a cofactor.

The protein resides in the cytoplasm. The catalysed reaction is (sulfur carrier)-H + L-cysteine = (sulfur carrier)-SH + L-alanine. The protein operates within cofactor biosynthesis; iron-sulfur cluster biosynthesis. In terms of biological role, master enzyme that delivers sulfur to a number of partners involved in Fe-S cluster assembly, tRNA modification or cofactor biosynthesis. Catalyzes the removal of elemental sulfur atoms from cysteine to produce alanine. Functions as a sulfur delivery protein for Fe-S cluster synthesis onto IscU, an Fe-S scaffold assembly protein, as well as other S acceptor proteins. The polypeptide is Cysteine desulfurase IscS (Vesicomyosocius okutanii subsp. Calyptogena okutanii (strain HA)).